A 512-amino-acid polypeptide reads, in one-letter code: MAKTLDSPGVLVVDFGGQYAHLIARRIRELGVYSEIVPATSLDALGEALPRAAGVVLSGGPGSVWGSRHDEAAAMVLQLGKPVLGICYGHQLLAKVLGGEVGRSPLPEFGPTEVEVLDYGILLNGLPSRFKVWMSHYDAVLRPPGEAKVLARTPGSPVAAMELWGRVFGVQWHPEVRHTQYGREVLDNWLSLVGAPRTWRPGDMVSELVESVKKEVGDALAVAAVSGGVDSTVAALIAKKAIGSRLYPVFIDHGLHPEGEVERVVKLLSRLGLEPVMVDAGEEFLAALEGVGDPEEKRRVVGRVYAEVLERAARDIGAEYLVQGTIYPDVIESGARPGADTIKTHHNVGGLPKDMRLKLVEPLRYFYKDEVRLLAEKLGVPRELIWKQPVPGPGLAVRVEGPITREKLRIVRRADAIVREEVEAAGLGGKLWQYFAVLTASMATGVRGDSRSYGYVVAVRAVESVDAMTAKPAELPWWLLERIARRITSEIPEVVRVVYDITSKPPSTIEWE.

Residues 9–198 (GVLVVDFGGQ…WLSLVGAPRT (190 aa)) form the Glutamine amidotransferase type-1 domain. Residue cysteine 87 is the Nucleophile of the active site. Catalysis depends on residues histidine 173 and glutamate 175. One can recognise a GMPS ATP-PPase domain in the interval 199-387 (WRPGDMVSEL…LGVPRELIWK (189 aa)). Residue 226 to 232 (SGGVDST) coordinates ATP.

It catalyses the reaction XMP + L-glutamine + ATP + H2O = GMP + L-glutamate + AMP + diphosphate + 2 H(+). It functions in the pathway purine metabolism; GMP biosynthesis; GMP from XMP (L-Gln route): step 1/1. Its function is as follows. Catalyzes the synthesis of GMP from XMP. The sequence is that of GMP synthase [glutamine-hydrolyzing] (guaA) from Aeropyrum pernix (strain ATCC 700893 / DSM 11879 / JCM 9820 / NBRC 100138 / K1).